The chain runs to 168 residues: Ribosome rescue factor SmrB (168 aa).

A Smr domain is found at 92-167 (LDLHGLTKEQ…GDAAILILFE (76 aa)).

The protein belongs to the SmrB family. Associates with collided ribosomes, but not with correctly translating polysomes.

In terms of biological role, acts as a ribosome collision sensor. Detects stalled/collided disomes (pairs of ribosomes where the leading ribosome is stalled and a second ribosome has collided with it) and endonucleolytically cleaves mRNA at the 5' boundary of the stalled ribosome. Stalled/collided disomes form a new interface (primarily via the 30S subunits) that binds SmrB. Cleaved mRNA becomes available for tmRNA ligation, leading to ribosomal subunit dissociation and rescue of stalled ribosomes. The chain is Ribosome rescue factor SmrB from Pasteurella multocida (strain Pm70).